A 326-amino-acid chain; its full sequence is Peroxidase 6 (326 aa).

Positions 1 to 20 (MKSFGLCLFILVSSPCLLQA) are cleaved as a signal peptide. N21 is a glycosylation site (N-linked (GlcNAc...) asparagine). 4 disulfide bridges follow: C31–C112, C64–C69, C118–C318, and C197–C228. The active-site Proton acceptor is the H62. Ca(2+)-binding residues include D63, V66, G68, D70, and S72. N-linked (GlcNAc...) asparagine glycosylation is present at N163. H190 is a heme b binding site. T191 contacts Ca(2+). N-linked (GlcNAc...) asparagine glycans are attached at residues N206 and N230. Ca(2+) is bound by residues D242, T245, and D250. The N-linked (GlcNAc...) asparagine glycan is linked to N274.

It belongs to the peroxidase family. Classical plant (class III) peroxidase subfamily. Requires heme b as cofactor. Ca(2+) serves as cofactor.

The protein localises to the secreted. The catalysed reaction is 2 a phenolic donor + H2O2 = 2 a phenolic radical donor + 2 H2O. Functionally, removal of H(2)O(2), oxidation of toxic reductants, biosynthesis and degradation of lignin, suberization, auxin catabolism, response to environmental stresses such as wounding, pathogen attack and oxidative stress. These functions might be dependent on each isozyme/isoform in each plant tissue. The protein is Peroxidase 6 (PER6) of Arabidopsis thaliana (Mouse-ear cress).